The chain runs to 246 residues: tRNA pseudouridine synthase A (246 aa).

The active-site Nucleophile is the Asp52. Tyr111 provides a ligand contact to substrate.

Belongs to the tRNA pseudouridine synthase TruA family. Homodimer.

The enzyme catalyses uridine(38/39/40) in tRNA = pseudouridine(38/39/40) in tRNA. Its function is as follows. Formation of pseudouridine at positions 38, 39 and 40 in the anticodon stem and loop of transfer RNAs. This is tRNA pseudouridine synthase A from Ehrlichia ruminantium (strain Welgevonden).